The following is a 129-amino-acid chain: MIQESVATGRRKQAVSSVRLRSGNGKIDVNGKTLEQYFPLEVQRATILAPLRMLGDVNSFDLIIRVSGGGVQGQVIATRLGLARAVLQEKEDIKQELKAQGFLTRDPRKKERKKYGRKKARKSFQFSKR.

Positions 98-129 are disordered; that stretch reads KAQGFLTRDPRKKERKKYGRKKARKSFQFSKR. Over residues 110 to 129 the composition is skewed to basic residues; that stretch reads KERKKYGRKKARKSFQFSKR.

It belongs to the universal ribosomal protein uS9 family.

The protein is Small ribosomal subunit protein uS9 of Chlamydia trachomatis serovar L2 (strain ATCC VR-902B / DSM 19102 / 434/Bu).